The following is a 375-amino-acid chain: Delta(9) fatty acid conjugase-like enzyme (375 aa).

Helical transmembrane passes span 38–58 and 66–86; these read LSLS…LFYV and LPYS…GAFL. Residues 94–98 carry the Histidine box-1 motif; sequence HECGH. Positions 130 to 134 match the Histidine box-2 motif; sequence HRNHH. 3 helical membrane passes run 168–188, 219–239, and 241–261; these read FGLV…YLIF, VFFS…IAIA, and GAML…AFIF. The Histidine box-3 signature appears at 307–311; that stretch reads HVVHH.

It belongs to the fatty acid desaturase type 1 family.

The protein resides in the membrane. Its function is as follows. Involved in the biosynthesis of dimorphecolic acid (9-OH-18:2(10E,12E)). Catalyzes the formation of the C-9 hydroxyl group and the (E)-delta(10) double bond from the trans-linoleic acid (16:2(9Z,12E)) produced by FAD2-1. Very limited activity with cis-linoleic acid (16:2(9Z,12Z)). The sequence is that of Delta(9) fatty acid conjugase-like enzyme from Dimorphotheca sinuata (African daisy).